The primary structure comprises 632 residues: Extracellular metalloproteinase 1 (632 aa).

A signal peptide spans Met1–Ala19. The propeptide occupies His20–His243. N-linked (GlcNAc...) asparagine glycosylation is present at Asn284. His427 provides a ligand contact to Zn(2+). Glu428 is an active-site residue. His431 lines the Zn(2+) pocket. Asn591 and Asn620 each carry an N-linked (GlcNAc...) asparagine glycan.

It belongs to the peptidase M36 family. Zn(2+) serves as cofactor.

It is found in the secreted. Functionally, secreted metalloproteinase that allows assimilation of proteinaceous substrates and probably acts as a virulence factor. This chain is Extracellular metalloproteinase 1 (MEP1), found in Arthroderma gypseum (strain ATCC MYA-4604 / CBS 118893) (Microsporum gypseum).